The following is a 295-amino-acid chain: MWIPYDLTGSLKAETSAASIQRSQADRSVRDVLVGFFVRNPITQSWEIDIRAEAVKEVLMAELDGMPTEIACYGGETGKLSEIIYRVKSAEPYAAFDACRHDLDDRLARWTLELGRGMTIAGWRVADPANEARWRCTPFRPSALDLDLNAVAFAPDDLKPLLRLYQRARNASDPAWRLLNAYAVLKCWRAGKAPFSLMPQQPAPVVTLEMLVHSGALGCAESFKDQPLASLVDALEVWRDAVLQDLEAPGEGAHGLRGEARWRLAHMASIADLAARETLIREIARRRSADLALAS.

The protein operates within one-carbon metabolism; methylamine degradation. The protein is Methylamine utilization protein MauJ (mauJ) of Methylorubrum extorquens (strain ATCC 14718 / DSM 1338 / JCM 2805 / NCIMB 9133 / AM1) (Methylobacterium extorquens).